Reading from the N-terminus, the 366-residue chain is tRNA (guanine(26)-N(2))-dimethyltransferase (366 aa).

A disordered region spans residues 1–28; it reads MEVSEGSVTVEVPEERHGASEGSGEGVF. A Trm1 methyltransferase domain is found at 1–365; that stretch reads MEVSEGSVTV…ADVADIRNAV (365 aa). S-adenosyl-L-methionine-binding residues include Arg-37, Arg-64, and Asp-79. Residues Cys-234, Cys-237, Cys-254, and Cys-257 each contribute to the Zn(2+) site.

This sequence belongs to the class I-like SAM-binding methyltransferase superfamily. Trm1 family.

It catalyses the reaction guanosine(26) in tRNA + 2 S-adenosyl-L-methionine = N(2)-dimethylguanosine(26) in tRNA + 2 S-adenosyl-L-homocysteine + 2 H(+). Functionally, dimethylates a single guanine residue at position 26 of a number of tRNAs using S-adenosyl-L-methionine as donor of the methyl groups. The protein is tRNA (guanine(26)-N(2))-dimethyltransferase of Natronomonas pharaonis (strain ATCC 35678 / DSM 2160 / CIP 103997 / JCM 8858 / NBRC 14720 / NCIMB 2260 / Gabara) (Halobacterium pharaonis).